The chain runs to 408 residues: uncharacterized protein (408 aa).

A divalent metal cation contacts are provided by Glu-35, Asp-61, and Asn-96.

Belongs to the metallophosphoesterase superfamily. A divalent metal cation is required as a cofactor.

This is an uncharacterized protein from Bacillus subtilis (strain 168).